The following is a 193-amino-acid chain: Segregation and condensation protein B (193 aa).

The protein belongs to the ScpB family. Homodimer. Homodimerization may be required to stabilize the binding of ScpA to the Smc head domains. Component of a cohesin-like complex composed of ScpA, ScpB and the Smc homodimer, in which ScpA and ScpB bind to the head domain of Smc. The presence of the three proteins is required for the association of the complex with DNA.

It localises to the cytoplasm. In terms of biological role, participates in chromosomal partition during cell division. May act via the formation of a condensin-like complex containing Smc and ScpA that pull DNA away from mid-cell into both cell halves. This Shouchella clausii (strain KSM-K16) (Alkalihalobacillus clausii) protein is Segregation and condensation protein B.